The following is a 94-amino-acid chain: Probable small nuclear ribonucleoprotein E (94 aa).

Residues 17-92 form the Sm domain; that stretch reads INLIFRYLQN…ITLIQNVSPT (76 aa).

The protein belongs to the snRNP Sm proteins family. Core component of the spliceosomal U1, U2, U4 and U5 small nuclear ribonucleoproteins (snRNPs), the building blocks of the spliceosome. Interacts with the SMN complex.

The protein resides in the nucleus. The protein localises to the cytoplasm. It is found in the cytosol. In terms of biological role, plays a role in pre-mRNA splicing as a core component of the spliceosomal U1, U2, U4 and U5 small nuclear ribonucleoproteins (snRNPs), the building blocks of the spliceosome. The protein is Probable small nuclear ribonucleoprotein E (SmE) of Drosophila melanogaster (Fruit fly).